We begin with the raw amino-acid sequence, 925 residues long: Coronin-7 (925 aa).

4 WD repeats span residues 75–115, 124–163, 166–205, and 209–253; these read CHSD…QALP, PEDL…PLTE, AHGD…QASQ, and AHEN…SALA. 2 disordered regions span residues 196–216 and 399–465; these read DPRT…SRDS and LVPP…SLQS. The segment covering 201-210 has biased composition (polar residues); sequence PQASQSTQAH. Positions 429 to 460 are enriched in low complexity; sequence SSPPSSLTSPSTPSSLGPTLSSTSGIGTGPSL. Phosphoserine is present on residues Ser-462 and Ser-465. Residue Lys-472 forms a Glycyl lysine isopeptide (Lys-Gly) (interchain with G-Cter in ubiquitin) linkage. WD repeat units follow at residues 542–582, 592–632, and 635–674; these read QNGA…LEEV, GHME…DRLK, and GHQD…EPLQ. Lys-680 is covalently cross-linked (Glycyl lysine isopeptide (Lys-Gly) (interchain with G-Cter in ubiquitin)). The WD 8 repeat unit spans residues 728–768; that stretch reads DVAPSTLVPSYEPRHWPGAPDWQGDARVFLYELLPESPFFM. The interval 857–925 is disordered; it reads LQPPDMSPVS…FEGVDEDEWD (69 aa). Positions 866–882 are enriched in low complexity; that stretch reads SQAPREAPARRAPSSAQ. Over residues 884–896 the composition is skewed to basic and acidic residues; the sequence is LEEKSDQQKKEEL. The residue at position 915 (Ser-915) is a Phosphoserine.

The protein belongs to the WD repeat coronin family. As to quaternary structure, interacts with clathrin adapter AP1 complex. This interaction takes place at Golgi membranes and not AP1-positive endosomal membranes. Interacts (when ubiquitinated at Lys-472) with EPS15. In terms of processing, the membrane-associated form is phosphorylated on tyrosine residues. Post-translationally, ubiquitinated via 'Lys-33'-linked ubiquitin chains by the BCR(KLHL20) E3 ubiquitin ligase complex: 'Lys-33'-linked ubiquitination promotes interaction with EPS15 and facilitates actin polymerization at the trans-Golgi network, thereby facilitating post-Golgi trafficking. Deubiquitinated by ZRANB1/TRABID.

The protein resides in the golgi apparatus membrane. The protein localises to the golgi apparatus. It is found in the trans-Golgi network. It localises to the cytoplasmic vesicle. Its subcellular location is the cytoplasm. The protein resides in the cytosol. Its function is as follows. F-actin regulator involved in anterograde Golgi to endosome transport: upon ubiquitination via 'Lys-33'-linked ubiquitin chains by the BCR(KLHL20) E3 ubiquitin ligase complex, interacts with EPS15 and localizes to the trans-Golgi network, where it promotes actin polymerization, thereby facilitating post-Golgi trafficking. May play a role in the maintenance of the Golgi apparatus morphology. The chain is Coronin-7 (CORO7) from Pongo abelii (Sumatran orangutan).